Reading from the N-terminus, the 455-residue chain is Ectonucleoside triphosphate diphosphohydrolase 6 (455 aa).

Residues 1 to 12 (MRKIPNHGTLRM) are Cytoplasmic-facing. Residues 13–32 (TKVAYPLGLCVGLFIYVAYI) traverse the membrane as a helical segment. At 33–455 (KWHRASAAQA…SLKRQKVPAL (423 aa)) the chain is on the lumenal side. The Proton acceptor role is filled by glutamate 196. Cystine bridges form between cysteine 297–cysteine 327 and cysteine 387–cysteine 401.

It belongs to the GDA1/CD39 NTPase family. Mg(2+) serves as cofactor. The cofactor is Ca(2+). Post-translationally, N-glycosylated.

The protein localises to the golgi apparatus membrane. It localises to the secreted. Its subcellular location is the cell membrane. It carries out the reaction a ribonucleoside 5'-diphosphate + H2O = a ribonucleoside 5'-phosphate + phosphate + H(+). The enzyme catalyses IDP + H2O = IMP + phosphate + H(+). The catalysed reaction is GDP + H2O = GMP + phosphate + H(+). It catalyses the reaction UDP + H2O = UMP + phosphate + H(+). Its function is as follows. Catalyzes the hydrolysis of nucleoside triphosphates and diphosphates in a calcium- or magnesium-dependent manner. Has a strong preference for nucleoside diphosphates, preferentially hydrolyzes GDP, IDP, and UDP, with slower hydrolysis of CDP, ITP, GTP, CTP, ADP, and UTP and virtually no hydrolysis of ATP. The membrane bound form might support glycosylation reactions in the Golgi apparatus and, when released from cells, might catalyze the hydrolysis of extracellular nucleotides. The protein is Ectonucleoside triphosphate diphosphohydrolase 6 of Mus musculus (Mouse).